Reading from the N-terminus, the 334-residue chain is HTH-type transcriptional repressor PurR (334 aa).

The 55-residue stretch at Ala2–Cys56 folds into the HTH lacI-type domain. Residues Ile4–Asn23 constitute a DNA-binding region (H-T-H motif). The DNA-binding element occupies Ser48–Cys56. Phe73, Lys189, Phe220, and Asp274 together coordinate hypoxanthine.

Homodimer.

Its pathway is purine metabolism; purine nucleotide biosynthesis [regulation]. Is the main repressor of the genes involved in the de novo synthesis of purine nucleotides, regulating purB, purC, purEK, purF, purHD, purL, purMN and guaBA expression. PurR is allosterically activated to bind its cognate DNA by binding the purine corepressors, hypoxanthine or guanine, thereby effecting transcription repression. In Vibrio campbellii (strain ATCC BAA-1116), this protein is HTH-type transcriptional repressor PurR.